Here is a 182-residue protein sequence, read N- to C-terminus: Interferon gamma 1 (182 aa).

A signal peptide spans M1–A21. An N-linked (GlcNAc...) asparagine glycan is attached at N93.

This sequence belongs to the type II (or gamma) interferon family. In terms of assembly, homodimer. Highly expressed in spleen. Also detected at lower levels in brain, gill, kidney, heart, intestine and muscle. In immune cell populations, has highest expression in peripheral blood leukocytes and splenocytes. Detected in kidney-derived monocytes, neutrophils, macrophages and leukocytes.

Its subcellular location is the secreted. Functionally, cytokine which binds to interferon gamma receptor 1-like (ifngr1l). Has activating effects on primary macrophages and neutrophils. Induces nitric oxide production and phagocytic responses in macrophages. Primes macrophages and neutrophils for production of reactive oxygen intermediates (ROI). Stimulates phosphorylation and nuclear localization of the JAK/STAT signal transducer stat1. Promotes increased expression of a number of genes important for macrophage activity, including the interferon regulatory factors irf1, irf2, irf8 and irf9. In Carassius auratus (Goldfish), this protein is Interferon gamma 1.